Consider the following 437-residue polypeptide: GTPase Era, mitochondrial (437 aa).

The N-terminal 20 residues, 1–20 (MAAPRRYFPGIVRALLGAWQ), are a transit peptide targeting the mitochondrion. The Era-type G domain maps to 112–330 (RVLRVVLLGA…QYLLTQAQPG (219 aa)). The interval 120-127 (GAPNAGKS) is G1. 120–127 (GAPNAGKS) is a GTP binding site. Positions 146-150 (HTTRC) are G2. Residues 167-170 (DTPG) are G3. Residue 167–171 (DTPGI) coordinates GTP. Ser-173 is modified (phosphoserine). 236–239 (NKVD) provides a ligand contact to GTP. Positions 236 to 239 (NKVD) are G4. The interval 272–293 (SRPSTHCPGPETEDPNTHAVRS) is disordered. The segment at 308 to 310 (LSA) is G5. A KH type-2 domain is found at 360 to 437 (LPEEVPYSVQ…LLRLSVKLLK (78 aa)).

Belongs to the TRAFAC class TrmE-Era-EngA-EngB-Septin-like GTPase superfamily. Era GTPase family.

It is found in the mitochondrion matrix. The protein resides in the mitochondrion inner membrane. Its function is as follows. Probable GTPase that plays a role in the mitochondrial ribosomal small subunit assembly. Specifically binds the 12S mitochondrial rRNA (12S mt-rRNA) to a 33 nucleotide section delineating the 3' terminal stem-loop region. May act as a chaperone that protects the 12S mt-rRNA on the 28S mitoribosomal subunit during ribosomal small subunit assembly. This Rattus norvegicus (Rat) protein is GTPase Era, mitochondrial (Eral1).